The chain runs to 815 residues: Vacuolar proton translocating ATPase 100 kDa subunit (815 aa).

Residues 1–402 are Cytoplasmic-facing; that stretch reads MSFLRPSIWR…NAYGIAHYRE (402 aa). A helical membrane pass occupies residues 403–421; it reads VNPAVLTIVTFPFLFGVMF. At 422–423 the chain is on the vacuolar side; that stretch reads GD. Residues 424–440 traverse the membrane as a helical segment; the sequence is VGHGALLLLSALGLISL. Residues 441–454 are Cytoplasmic-facing; it reads EKKLAGKKLNELIQ. The chain crosses the membrane as a helical span at residues 455 to 484; sequence MPFDGRYVLFLMSLFSIYVGFIYNECFSIP. The Vacuolar portion of the chain corresponds to 485–530; it reads MNIFGSQYNLNSTTGLYTYQHTDRVYPVGVDPLWKGAPNELVYYNS. Residues 531-550 form a helical membrane-spanning segment; sequence FKMKLSIIFGVVQMSVGICF. The Cytoplasmic portion of the chain corresponds to 551–571; it reads SLLNYLNQKGPIKIVNILTQF. A helical transmembrane segment spans residues 572–592; sequence VPQMIFLWSIFGYMSVLIILK. The Vacuolar segment spans residues 593–639; sequence WVVPYRSFEVDKVDPPFILPTIIAMFLSPGGTPDVVFFSGQGAVQTA. The chain crosses the membrane as a helical span at residues 640-659; the sequence is LLFLALISIPVMLVIKPLFM. Residues 660-706 lie on the Cytoplasmic side of the membrane; sequence KRFHFQEVERKKLGHHEEEHDDEALYTGHHGEEFEMGEVFVHQVIHT. Residues 707-731 form a helical membrane-spanning segment; the sequence is IEFVLGAVSNTASYLRLWALSLAHS. Topologically, residues 732–749 are vacuolar; it reads ELSSVFWERILIGQVERG. The chain crosses the membrane as a helical span at residues 750-788; the sequence is NPFLAFVGFGAWLGASVAVLLLMESLSAFLHALRLHWVE. Residues 789-815 are Cytoplasmic-facing; that stretch reads FQNKFYIGDGVRFIPYSATRILSEDDE.

This sequence belongs to the V-ATPase 116 kDa subunit family. As to quaternary structure, the V-ATPase is a heteromultimeric enzyme.

The protein localises to the cytoplasmic vesicle membrane. The protein resides in the endosome membrane. It localises to the vacuole membrane. It is found in the lysosome membrane. Its function is as follows. Essential component of the vacuolar proton pump (V-ATPase), a multimeric enzyme that catalyzes the translocation of protons across the membranes. Required for assembly and activity of the V-ATPase. Required in both the contractile vacuole system and the endosomal/lysosomal system. Also required for cytosolic pH regulation. The polypeptide is Vacuolar proton translocating ATPase 100 kDa subunit (vatM) (Dictyostelium discoideum (Social amoeba)).